The following is a 429-amino-acid chain: Glutamate-1-semialdehyde 2,1-aminomutase 1 (429 aa).

Lys267 carries the N6-(pyridoxal phosphate)lysine modification.

The protein belongs to the class-III pyridoxal-phosphate-dependent aminotransferase family. HemL subfamily. In terms of assembly, homodimer. It depends on pyridoxal 5'-phosphate as a cofactor.

It localises to the cytoplasm. The enzyme catalyses (S)-4-amino-5-oxopentanoate = 5-aminolevulinate. It functions in the pathway porphyrin-containing compound metabolism; protoporphyrin-IX biosynthesis; 5-aminolevulinate from L-glutamyl-tRNA(Glu): step 2/2. The chain is Glutamate-1-semialdehyde 2,1-aminomutase 1 from Staphylococcus carnosus (strain TM300).